The primary structure comprises 1048 residues: Putative truncated guanine nucleotide exchange factor SDC25 (1048 aa).

Disordered regions lie at residues 208–242 (SKQG…VSGS) and 419–444 (LNLD…DEYE). The span at 212–224 (TSCSSETSHHSPS) shows a compositional bias: low complexity. One can recognise an N-terminal Ras-GEF domain in the interval 578-710 (SNNRIKGGSK…LLKEVNQKFK (133 aa)). The Ras-GEF domain occupies 748 to 995 (DPVLFATQLT…YQLSLIIEPK (248 aa)). The tract at residues 997-1048 (RKKVVPNSNSNNKSQEKSRDDQTDEGKTSTKKDRFPKFQLHKTKKKAPKVSK) is disordered. The segment covering 1010–1032 (SQEKSRDDQTDEGKTSTKKDRFP) has biased composition (basic and acidic residues). Over residues 1035-1048 (QLHKTKKKAPKVSK) the composition is skewed to basic residues.

Functionally, promotes the exchange of Ras-bound GDP by GTP. The sequence is that of Putative truncated guanine nucleotide exchange factor SDC25 (SDC25) from Saccharomyces cerevisiae (strain ATCC 204508 / S288c) (Baker's yeast).